Here is a 427-residue protein sequence, read N- to C-terminus: Trigger factor (427 aa).

The PPIase FKBP-type domain maps to Gly163–Pro248.

The protein belongs to the FKBP-type PPIase family. Tig subfamily.

The protein resides in the cytoplasm. It carries out the reaction [protein]-peptidylproline (omega=180) = [protein]-peptidylproline (omega=0). Functionally, involved in protein export. Acts as a chaperone by maintaining the newly synthesized protein in an open conformation. Functions as a peptidyl-prolyl cis-trans isomerase. The protein is Trigger factor (tig) of Streptococcus pyogenes serotype M1.